Consider the following 143-residue polypeptide: ATP synthase F(0) complex subunit C2, mitochondrial (143 aa).

A mitochondrion-targeting transit peptide spans 1–68 (MYTCAKFVST…RSFQTSAISR (68 aa)). The chain crosses the membrane as a helical span at residues 84–104 (VGVAGSGAGIGTVFGSLIIGY). Residue K111 is modified to N6,N6,N6-trimethyllysine. A helical transmembrane segment spans residues 119–139 (ILGFALSEAMGLFCLMVAFLI).

It belongs to the ATPase C chain family. In terms of assembly, F-type ATPases have 2 components, CF(1) - the catalytic core - and CF(0) - the membrane proton channel. CF(1) has five subunits: alpha(3), beta(3), gamma(1), delta(1), epsilon(1). CF(0) has three main subunits: a, b and c. Interacts with DNAJC30; interaction is direct. Trimethylated by ATPSCKMT at Lys-111. Methylation is required for proper incorporation of the C subunit into the ATP synthase complex and mitochondrial respiration.

Its subcellular location is the mitochondrion membrane. In terms of biological role, mitochondrial membrane ATP synthase (F(1)F(0) ATP synthase or Complex V) produces ATP from ADP in the presence of a proton gradient across the membrane which is generated by electron transport complexes of the respiratory chain. F-type ATPases consist of two structural domains, F(1) - containing the extramembraneous catalytic core and F(0) - containing the membrane proton channel, linked together by a central stalk and a peripheral stalk. During catalysis, ATP synthesis in the catalytic domain of F(1) is coupled via a rotary mechanism of the central stalk subunits to proton translocation. Part of the complex F(0) domain. A homomeric c-ring of probably 10 subunits is part of the complex rotary element. This is ATP synthase F(0) complex subunit C2, mitochondrial from Ovis aries (Sheep).